Reading from the N-terminus, the 319-residue chain is Aspartate carbamoyltransferase catalytic subunit (319 aa).

Arginine 65 and threonine 66 together coordinate carbamoyl phosphate. Lysine 93 provides a ligand contact to L-aspartate. Positions 115, 143, and 146 each coordinate carbamoyl phosphate. 2 residues coordinate L-aspartate: arginine 176 and arginine 230. Residues glycine 271 and proline 272 each contribute to the carbamoyl phosphate site.

The protein belongs to the aspartate/ornithine carbamoyltransferase superfamily. ATCase family. Heterododecamer (2C3:3R2) of six catalytic PyrB chains organized as two trimers (C3), and six regulatory PyrI chains organized as three dimers (R2).

It catalyses the reaction carbamoyl phosphate + L-aspartate = N-carbamoyl-L-aspartate + phosphate + H(+). Its pathway is pyrimidine metabolism; UMP biosynthesis via de novo pathway; (S)-dihydroorotate from bicarbonate: step 2/3. In terms of biological role, catalyzes the condensation of carbamoyl phosphate and aspartate to form carbamoyl aspartate and inorganic phosphate, the committed step in the de novo pyrimidine nucleotide biosynthesis pathway. The sequence is that of Aspartate carbamoyltransferase catalytic subunit from Chelativorans sp. (strain BNC1).